The sequence spans 27 residues: Omega-conotoxin RVIA (27 aa).

3 cysteine pairs are disulfide-bonded: Cys1-Cys16, Cys8-Cys19, and Cys15-Cys26. Pro4 and Pro7 each carry 4-hydroxyproline.

This sequence belongs to the conotoxin O1 superfamily. Expressed by the venom duct.

It localises to the secreted. Functionally, omega-conotoxins act at presynaptic membranes, they bind and block voltage-gated calcium channels (Cav). This chain is Omega-conotoxin RVIA, found in Conus radiatus (Rayed cone).